The sequence spans 697 residues: Potassium-transporting ATPase ATP-binding subunit (697 aa).

4 helical membrane-spanning segments follow: residues proline 55 to serine 75, glycine 82 to alanine 102, leucine 245 to phenylalanine 265, and valine 271 to isoleucine 291. Aspartate 324 (4-aspartylphosphate intermediate) is an active-site residue. ATP-binding positions include aspartate 361, glutamate 365, phenylalanine 393–serine 400, and lysine 412. Residues aspartate 535 and aspartate 539 each contribute to the Mg(2+) site. Helical transmembrane passes span phenylalanine 605 to methionine 625, alanine 633 to methionine 653, and glycine 677 to isoleucine 697.

The protein belongs to the cation transport ATPase (P-type) (TC 3.A.3) family. Type IA subfamily. As to quaternary structure, the system is composed of three essential subunits: KdpA, KdpB and KdpC.

The protein localises to the cell membrane. The catalysed reaction is K(+)(out) + ATP + H2O = K(+)(in) + ADP + phosphate + H(+). Part of the high-affinity ATP-driven potassium transport (or Kdp) system, which catalyzes the hydrolysis of ATP coupled with the electrogenic transport of potassium into the cytoplasm. This subunit is responsible for energy coupling to the transport system and for the release of the potassium ions to the cytoplasm. The sequence is that of Potassium-transporting ATPase ATP-binding subunit from Bacillus cereus (strain AH187).